Here is a 140-residue protein sequence, read N- to C-terminus: Putative nickel-responsive regulator 3 (140 aa).

The Ni(2+) site is built by H81, H92, H94, and C100.

Belongs to the transcriptional regulatory CopG/NikR family. Ni(2+) serves as cofactor.

Transcriptional regulator. The polypeptide is Putative nickel-responsive regulator 3 (Methanosarcina mazei (strain ATCC BAA-159 / DSM 3647 / Goe1 / Go1 / JCM 11833 / OCM 88) (Methanosarcina frisia)).